Consider the following 204-residue polypeptide: Holliday junction branch migration complex subunit RuvA (204 aa).

The tract at residues 1 to 64 (MIGRVTGILV…EDAHLLFGFS (64 aa)) is domain I. The interval 65-143 (HKQDRSLFRE…GLQQTDFFIK (79 aa)) is domain II. Residues 144-155 (SSHLPGIKCSKL) are flexible linker. The domain III stretch occupies residues 156–204 (DQSLQLDEAVSALIALGYKPIEAEKMVKKVLKADLTSEQLIREALKAAL).

This sequence belongs to the RuvA family. Homotetramer. Forms an RuvA(8)-RuvB(12)-Holliday junction (HJ) complex. HJ DNA is sandwiched between 2 RuvA tetramers; dsDNA enters through RuvA and exits via RuvB. An RuvB hexamer assembles on each DNA strand where it exits the tetramer. Each RuvB hexamer is contacted by two RuvA subunits (via domain III) on 2 adjacent RuvB subunits; this complex drives branch migration. In the full resolvosome a probable DNA-RuvA(4)-RuvB(12)-RuvC(2) complex forms which resolves the HJ.

It localises to the cytoplasm. Its function is as follows. The RuvA-RuvB-RuvC complex processes Holliday junction (HJ) DNA during genetic recombination and DNA repair, while the RuvA-RuvB complex plays an important role in the rescue of blocked DNA replication forks via replication fork reversal (RFR). RuvA specifically binds to HJ cruciform DNA, conferring on it an open structure. The RuvB hexamer acts as an ATP-dependent pump, pulling dsDNA into and through the RuvAB complex. HJ branch migration allows RuvC to scan DNA until it finds its consensus sequence, where it cleaves and resolves the cruciform DNA. The polypeptide is Holliday junction branch migration complex subunit RuvA (Histophilus somni (strain 2336) (Haemophilus somnus)).